The sequence spans 151 residues: Large ribosomal subunit protein uL22 (151 aa).

Residues 1 to 18 (MARINYSINGDPETTSKA) are compositionally biased toward polar residues. The disordered stretch occupies residues 1 to 23 (MARINYSINGDPETTSKAMGSEL).

This sequence belongs to the universal ribosomal protein uL22 family. In terms of assembly, part of the 50S ribosomal subunit.

Functionally, this protein binds specifically to 23S rRNA. It makes multiple contacts with different domains of the 23S rRNA in the assembled 50S subunit and ribosome. In terms of biological role, the globular domain of the protein is located near the polypeptide exit tunnel on the outside of the subunit, while an extended beta-hairpin is found that lines the wall of the exit tunnel in the center of the 70S ribosome. The sequence is that of Large ribosomal subunit protein uL22 from Methanosarcina acetivorans (strain ATCC 35395 / DSM 2834 / JCM 12185 / C2A).